Reading from the N-terminus, the 717-residue chain is Eukaryotic translation initiation factor 3 subunit B (717 aa).

The segment at 1-89 is sufficient for interaction with HCR1 and TIF32; the sequence is MTVEDNLDID…VFIEYETGEM (89 aa). The tract at residues 1-216 is sufficient for interaction with PIC8; that stretch reads MTVEDNLDID…GVQLWGGPDW (216 aa). Positions 28–115 constitute an RRM domain; it reads SFIVVDGAPV…HKLLVNKLSE (88 aa). 6 WD repeats span residues 183-221, 223-284, 293-332, 445-484, 506-549, and 564-609; these read RERWTETQVYWSPTGTYLVSTHTQGVQLWGGPDWAPPIC, FQHP…PVRT, GASMSWPILKFSPDDKYAARMIPGEQLSIYETETMSLLDK, ELKDTVTNMAWEPHGDRFVTISNSDSTTNYDGPLPANRHT, FDKK…DRKH, and SEHY…QREE.

It belongs to the eIF-3 subunit B family. In terms of assembly, component of the eukaryotic translation initiation factor 3 (eIF-3) complex.

It localises to the cytoplasm. In terms of biological role, RNA-binding component of the eukaryotic translation initiation factor 3 (eIF-3) complex, which is involved in protein synthesis of a specialized repertoire of mRNAs and, together with other initiation factors, stimulates binding of mRNA and methionyl-tRNAi to the 40S ribosome. The eIF-3 complex specifically targets and initiates translation of a subset of mRNAs involved in cell proliferation. This Yarrowia lipolytica (strain CLIB 122 / E 150) (Yeast) protein is Eukaryotic translation initiation factor 3 subunit B.